A 303-amino-acid chain; its full sequence is tRNA dimethylallyltransferase (303 aa).

10 to 17 provides a ligand contact to ATP; that stretch reads GPTASGKS. 12 to 17 serves as a coordination point for substrate; it reads TASGKS. The tract at residues 35-38 is interaction with substrate tRNA; it reads DSMQ.

Belongs to the IPP transferase family. In terms of assembly, monomer. The cofactor is Mg(2+).

It catalyses the reaction adenosine(37) in tRNA + dimethylallyl diphosphate = N(6)-dimethylallyladenosine(37) in tRNA + diphosphate. Catalyzes the transfer of a dimethylallyl group onto the adenine at position 37 in tRNAs that read codons beginning with uridine, leading to the formation of N6-(dimethylallyl)adenosine (i(6)A). The sequence is that of tRNA dimethylallyltransferase from Methylobacterium nodulans (strain LMG 21967 / CNCM I-2342 / ORS 2060).